Here is an 84-residue protein sequence, read N- to C-terminus: Small ribosomal subunit protein bS18A (84 aa).

The protein belongs to the bacterial ribosomal protein bS18 family. Part of the 30S ribosomal subunit. Forms a tight heterodimer with protein bS6.

In terms of biological role, binds as a heterodimer with protein bS6 to the central domain of the 16S rRNA, where it helps stabilize the platform of the 30S subunit. This Mycobacterium marinum (strain ATCC BAA-535 / M) protein is Small ribosomal subunit protein bS18A.